Here is a 520-residue protein sequence, read N- to C-terminus: Probable methylmalonate-semialdehyde/malonate-semialdehyde dehydrogenase [acylating], mitochondrial (520 aa).

6 residues coordinate NAD(+): Ala169, Phe171, Lys195, Glu198, Arg199, and Ser248. Residue Cys303 is the Nucleophile of the active site. Residue Glu403 participates in NAD(+) binding.

This sequence belongs to the aldehyde dehydrogenase family. In terms of assembly, homotetramer.

Its subcellular location is the mitochondrion. The catalysed reaction is 2-methyl-3-oxopropanoate + NAD(+) + CoA + H2O = propanoyl-CoA + hydrogencarbonate + NADH + H(+). It catalyses the reaction 3-oxopropanoate + NAD(+) + CoA + H2O = hydrogencarbonate + acetyl-CoA + NADH + H(+). Functionally, probable malonate and methylmalonate semialdehyde dehydrogenase involved in the catabolism of valine, thymine, and compounds catabolized by way of beta-alanine, including uracil and cytidine. This Drosophila pseudoobscura pseudoobscura (Fruit fly) protein is Probable methylmalonate-semialdehyde/malonate-semialdehyde dehydrogenase [acylating], mitochondrial.